We begin with the raw amino-acid sequence, 385 residues long: DNA replication and repair protein RecF (385 aa).

30–37 lines the ATP pocket; the sequence is GRNGQGKT.

The protein belongs to the RecF family.

It localises to the cytoplasm. In terms of biological role, the RecF protein is involved in DNA metabolism; it is required for DNA replication and normal SOS inducibility. RecF binds preferentially to single-stranded, linear DNA. It also seems to bind ATP. This Leifsonia xyli subsp. xyli (strain CTCB07) protein is DNA replication and repair protein RecF.